The following is a 205-amino-acid chain: Holliday junction resolvase RecU (205 aa).

A disordered region spans residues 1 to 26 (MIRYPNGKSYQPIQPIGTKKRISGES). 4 residues coordinate Mg(2+): T86, D88, E101, and Q120.

The protein belongs to the RecU family. The cofactor is Mg(2+).

The protein resides in the cytoplasm. The catalysed reaction is Endonucleolytic cleavage at a junction such as a reciprocal single-stranded crossover between two homologous DNA duplexes (Holliday junction).. Functionally, endonuclease that resolves Holliday junction intermediates in genetic recombination. Cleaves mobile four-strand junctions by introducing symmetrical nicks in paired strands. Promotes annealing of linear ssDNA with homologous dsDNA. Required for DNA repair, homologous recombination and chromosome segregation. This chain is Holliday junction resolvase RecU, found in Bacillus pumilus (strain SAFR-032).